The following is a 1258-amino-acid chain: Splicing factor, arginine/serine-rich 19 (1258 aa).

6 disordered regions span residues 1–32 (MEEE…LSPS), 159–345 (KTVS…PRRR), 370–398 (GGPA…EEEP), 410–1034 (PRQP…PPPM), 1114–1154 (GSLP…DKYL), and 1223–1258 (FRKH…LPPL). Positions 7 to 27 (SRGKTEESGEDRGDGPPDRDP) are enriched in basic and acidic residues. Residues 193 to 207 (SSASSSPSPSPSSSS) show a composition bias toward low complexity. Positions 208–223 (PSPPPPPPPPPPPALP) are enriched in pro residues. Residues 228–237 (DIYDPFHPTD) show a composition bias toward basic and acidic residues. Position 241 is a phosphoserine (Ser241). The span at 256-266 (TGSNPSSSAGT) shows a compositional bias: polar residues. Positions 269-283 (PEEEEEEEEEEEEEG) are enriched in acidic residues. A Phosphothreonine modification is found at Thr329. Pro residues predominate over residues 374-383 (LPLPPLPPTD). Over residues 384-395 (PEIEEGEIVQPE) the composition is skewed to acidic residues. Low complexity predominate over residues 414–426 (PASVATLASVAAP). Residues Ser444 and Ser449 each carry the phosphoserine modification. Residues 480–491 (KILTQRRERYRQ) show a composition bias toward basic residues. Phosphoserine is present on residues Ser493, Ser495, Ser512, and Ser520. 2 stretches are compositionally biased toward basic residues: residues 540 to 555 (TARR…RSRS) and 562 to 579 (RGSH…RRRS). 2 positions are modified to phosphoserine: Ser579 and Ser581. Positions 594–613 (RERHRGKRREGGKKKKKRSR) are enriched in basic residues. The segment covering 614–625 (SRAEKRSGDLEK) has biased composition (basic and acidic residues). Thr665 bears the Phosphothreonine mark. A phosphoserine mark is found at Ser678 and Ser684. Tyr691 is modified (phosphotyrosine). A phosphoserine mark is found at Ser693 and Ser697. 2 stretches are compositionally biased toward basic and acidic residues: residues 698 to 711 (ADER…DRRR) and 721 to 743 (SREK…DRSS). Composition is skewed to low complexity over residues 752–777 (SAPG…SCSS) and 795–806 (SSTTPAKDSSSS). Lys814 participates in a covalent cross-link: Glycyl lysine isopeptide (Lys-Gly) (interchain with G-Cter in SUMO2). Basic and acidic residues predominate over residues 815–833 (FSRDRESRSPFLKPDERAP). Residues Ser821 and Ser823 each carry the phosphoserine modification. Residues 845 to 877 (KPKKTKAKAKAGAKKAKGTKGKTKPSKTRKKVR) are compositionally biased toward basic residues. Phosphoserine is present on residues Ser878, Ser885, Ser912, and Ser914. Over residues 924 to 937 (STPPPKVAPPPPAL) the composition is skewed to pro residues. A phosphothreonine mark is found at Thr925 and Thr938. The span at 940–949 (DSQTVDSSCK) shows a compositional bias: polar residues. Residue Ser941 is modified to Phosphoserine. Thr950 bears the Phosphothreonine mark. Acidic residues predominate over residues 971–986 (EEEEEEEEEEEEEEEQ). Low complexity predominate over residues 987 to 1019 (QPATTTATSTAAAAPSTAPSAGSTAGDSGAEDG). The interval 1133–1258 (PASDKREGSS…GGPGLPLPPL (126 aa)) is necessary for interaction with the CTD domain of POLR2A. Positions 1135 to 1154 (SDKREGSSSSEGRGDTDKYL) are enriched in basic and acidic residues. The segment covering 1246–1258 (PDKGGPGLPLPPL) has biased composition (pro residues).

This sequence belongs to the splicing factor SR family. Interacts with POLR2A.

The protein localises to the nucleus. In terms of biological role, may function in pre-mRNA splicing. The sequence is that of Splicing factor, arginine/serine-rich 19 (Scaf1) from Rattus norvegicus (Rat).